We begin with the raw amino-acid sequence, 309 residues long: Ribose-phosphate pyrophosphokinase (309 aa).

ATP is bound by residues 37–39 (DGE) and 96–97 (RQ). H130 and D169 together coordinate Mg(2+). K192 is a catalytic residue. D-ribose 5-phosphate-binding positions include R194, D218, and 222–226 (DTAGT).

Belongs to the ribose-phosphate pyrophosphokinase family. Class I subfamily. In terms of assembly, homohexamer. Mg(2+) serves as cofactor.

It localises to the cytoplasm. It carries out the reaction D-ribose 5-phosphate + ATP = 5-phospho-alpha-D-ribose 1-diphosphate + AMP + H(+). Its pathway is metabolic intermediate biosynthesis; 5-phospho-alpha-D-ribose 1-diphosphate biosynthesis; 5-phospho-alpha-D-ribose 1-diphosphate from D-ribose 5-phosphate (route I): step 1/1. Functionally, involved in the biosynthesis of the central metabolite phospho-alpha-D-ribosyl-1-pyrophosphate (PRPP) via the transfer of pyrophosphoryl group from ATP to 1-hydroxyl of ribose-5-phosphate (Rib-5-P). This Campylobacter jejuni subsp. jejuni serotype O:2 (strain ATCC 700819 / NCTC 11168) protein is Ribose-phosphate pyrophosphokinase.